The primary structure comprises 239 residues: Ribonuclease P protein component 3 (239 aa).

This sequence belongs to the eukaryotic/archaeal RNase P protein component 3 family. As to quaternary structure, consists of a catalytic RNA component and at least 4-5 protein subunits.

It is found in the cytoplasm. The enzyme catalyses Endonucleolytic cleavage of RNA, removing 5'-extranucleotides from tRNA precursor.. Its function is as follows. Part of ribonuclease P, a protein complex that generates mature tRNA molecules by cleaving their 5'-ends. This chain is Ribonuclease P protein component 3, found in Methanosarcina acetivorans (strain ATCC 35395 / DSM 2834 / JCM 12185 / C2A).